We begin with the raw amino-acid sequence, 168 residues long: Putative insulin-like growth factor 2 antisense gene protein (168 aa).

Disordered regions lie at residues Met1 to Asn91 and Pro108 to Lys168. Basic residues-rich tracts occupy residues Ala59–Ala70 and Arg159–Lys168.

In Homo sapiens (Human), this protein is Putative insulin-like growth factor 2 antisense gene protein (IGF2-AS).